Consider the following 627-residue polypeptide: Protein fem-1 homolog B (627 aa).

ANK repeat units lie at residues 45 to 74 (QRST…VQTQ), 87 to 116 (DGAT…NVNH), 120 to 149 (TNST…NISI), and 153 to 182 (YDNT…DPNA). 3 residues coordinate Zn(2+): histidine 185, cysteine 186, and histidine 218. 2 ANK repeats span residues 186–215 (CGAT…AIVV) and 218–248 (HGMT…DRRS). Residues 344-377 (SHPIIYRGAVYADNMEFEQCIKLWLHALHLRQKG) form a TPR repeat. 2 ANK repeats span residues 483-527 (EGFS…EVNA) and 531-568 (EGNS…HTDM).

It belongs to the fem-1 family. In terms of assembly, component of a CRL2 E3 ubiquitin-protein ligase complex, also named ECS (Elongin BC-CUL2/5-SOCS-box protein) complex, composed of CUL2, Elongin BC (ELOB and ELOC), RBX1 and substrate-specific adapter FEM1B. Homooligomer. Interacts with PPM1F and PHTF1. Interacts with the death domain of FAS/TNFRSF6 and TNFRSF1A. Interacts with CHEK1. Interacts with NKX3-1. Expressed in pancreatic islets, within both beta cells and non-beta cells (at protein level). Highly expressed in adult testis; expressed in all types of spermatogonia. Also expressed in the prostate of neonatal mice.

Its subcellular location is the cytoplasm. The protein localises to the nucleus. It participates in protein modification; protein ubiquitination. With respect to regulation, activity of the CRL2(FEM1B) complex toward FNIP1 is inhibited by BEX family proteins (BEX1, BEX2, BEX3 and/or BEX4) in absence of reductive stress. Mechanistically, BEX proteins act as pseudosubstrate inhibitors that associate with FEM1B via zinc in absence of reductive stress, thereby preventing association between FEM1B and FNIP1. Functionally, substrate-recognition component of a Cul2-RING (CRL2) E3 ubiquitin-protein ligase complex of the DesCEND (destruction via C-end degrons) pathway, which recognizes a C-degron located at the extreme C terminus of target proteins, leading to their ubiquitination and degradation. The C-degron recognized by the DesCEND pathway is usually a motif of less than ten residues and can be present in full-length proteins, truncated proteins or proteolytically cleaved forms. The CRL2(FEM1B) complex specifically recognizes proteins ending with -Gly-Leu-Asp-Arg, such as CDK5R1, leading to their ubiquitination and degradation. Also acts as a regulator of the reductive stress response by mediating ubiquitination of reduced FNIP1: in response to reductive stress, the CRL2(FEM1B) complex specifically recognizes a conserved Cys degron in FNIP1 when this degron is reduced, leading to FNIP1 degradation and subsequent activation of mitochondria to recalibrate reactive oxygen species (ROS). Mechanistically, recognizes and binds reduced FNIP1 through two interface zinc ions, which act as a molecular glue that recruit reduced FNIP1 to FEM1B. Promotes ubiquitination of GLI1, suppressing GLI1 transcriptional activator activity. Promotes ubiquitination and degradation of ANKRD37. Promotes ubiquitination and degradation of SLBP. Involved in apoptosis by acting as a death receptor-associated protein that mediates apoptosis. Also involved in glucose homeostasis in pancreatic islet. May also act as an adapter/mediator in replication stress-induced signaling that leads to the activation of CHEK1. The sequence is that of Protein fem-1 homolog B from Mus musculus (Mouse).